The following is a 188-amino-acid chain: Inner membrane-spanning protein YciB (188 aa).

A run of 5 helical transmembrane segments spans residues 22 to 42, 50 to 70, 72 to 92, 121 to 141, and 149 to 169; these read IYIA…VTWM, MTLV…VFHN, LFIK…LLVS, FAWA…AFWL, and FKVF…GVYI.

Belongs to the YciB family.

It is found in the cell inner membrane. Its function is as follows. Plays a role in cell envelope biogenesis, maintenance of cell envelope integrity and membrane homeostasis. The polypeptide is Inner membrane-spanning protein YciB (Pectobacterium carotovorum subsp. carotovorum (strain PC1)).